A 392-amino-acid polypeptide reads, in one-letter code: Phosphopentomutase (392 aa).

Mn(2+) contacts are provided by D10, D282, H287, D323, H324, and H335.

It belongs to the phosphopentomutase family. Requires Mn(2+) as cofactor.

The protein resides in the cytoplasm. The catalysed reaction is 2-deoxy-alpha-D-ribose 1-phosphate = 2-deoxy-D-ribose 5-phosphate. The enzyme catalyses alpha-D-ribose 1-phosphate = D-ribose 5-phosphate. It functions in the pathway carbohydrate degradation; 2-deoxy-D-ribose 1-phosphate degradation; D-glyceraldehyde 3-phosphate and acetaldehyde from 2-deoxy-alpha-D-ribose 1-phosphate: step 1/2. Its function is as follows. Isomerase that catalyzes the conversion of deoxy-ribose 1-phosphate (dRib-1-P) and ribose 1-phosphate (Rib-1-P) to deoxy-ribose 5-phosphate (dRib-5-P) and ribose 5-phosphate (Rib-5-P), respectively. The sequence is that of Phosphopentomutase from Dictyoglomus thermophilum (strain ATCC 35947 / DSM 3960 / H-6-12).